We begin with the raw amino-acid sequence, 933 residues long: Bifunctional uridylyltransferase/uridylyl-removing enzyme (933 aa).

The interval 1–390 (MLSTRAASAD…RLAALARRKD (390 aa)) is uridylyltransferase. Residues 391–745 (VDGFVVDGER…TRIDRGRAIT (355 aa)) form a uridylyl-removing region. The HD domain maps to 506–628 (VDEHTLFALG…VQSPERLRLL (123 aa)). ACT domains are found at residues 746–829 (EVTI…DLTK) and 859–933 (VIEV…DPSA).

The protein belongs to the GlnD family. Mg(2+) serves as cofactor.

It carries out the reaction [protein-PII]-L-tyrosine + UTP = [protein-PII]-uridylyl-L-tyrosine + diphosphate. The catalysed reaction is [protein-PII]-uridylyl-L-tyrosine + H2O = [protein-PII]-L-tyrosine + UMP + H(+). Uridylyltransferase (UTase) activity is inhibited by glutamine, while glutamine activates uridylyl-removing (UR) activity. Uridylylation process is dependent on ATP and 2-oxoglutarate, which are effector molecules that likely bind to PII proteins and control their activity. Functionally, modifies, by uridylylation and deuridylylation, the PII regulatory proteins GlnB and GlnZ, in response to the nitrogen status of the cell that GlnD senses through the glutamine level. Under low glutamine levels, catalyzes the conversion of the PII proteins and UTP to PII-UMP and PPi, while under higher glutamine levels, GlnD hydrolyzes PII-UMP to PII and UMP (deuridylylation). Thus, controls uridylylation state and activity of the PII proteins, and plays an important role in the regulation of nitrogen fixation and metabolism. The chain is Bifunctional uridylyltransferase/uridylyl-removing enzyme from Azospirillum brasilense.